Reading from the N-terminus, the 111-residue chain is Putative pterin-4-alpha-carbinolamine dehydratase (111 aa).

Belongs to the pterin-4-alpha-carbinolamine dehydratase family.

It carries out the reaction (4aS,6R)-4a-hydroxy-L-erythro-5,6,7,8-tetrahydrobiopterin = (6R)-L-erythro-6,7-dihydrobiopterin + H2O. The polypeptide is Putative pterin-4-alpha-carbinolamine dehydratase (Marinobacter nauticus (strain ATCC 700491 / DSM 11845 / VT8) (Marinobacter aquaeolei)).